The chain runs to 840 residues: MMSIQEKSKENSSKVTKKSDDKNSETEIQDSQKNLAKKSGPKETIKSQAKSSSESKINQPELETRMSTRSSKAASNDKATKSINKNTVTVRGYSQESTKKKLSQKKLVHENPKANEQLNRRSQRLQQLTEVSRRSLRSREIQGQVQAVKQSLPPTKKEQCSSTQSKSNKTSQKHVKRKVLEVKSDSKEDENLVINEVINSPKGKKRKVEHQTACACSSQCTQGSEKCPQKTTRRDETKPVPVTSEVKRSKMATSVVPKKNEMKKSVHTQVNTNTTLPKSPQPSVPEQSDNELEQAGKSKRGSILQLCEEIAGEIESDNVEVKKESSQMESVKEEKPTEIKLEETSVERQILHQKETNQDVQCNRFFPSRKTKPVKCILNGINSSAKKNSNWTKIKLSKFNSVQHNKLDSQVSPKLGLLRTSFSPPALEMHHPVTQSTFLGTKLHDRNITCQQEKMKEINSEEVKINDITVEINKTTERAPENCHLANEIKPSDPPLDNQMKHSFDSASNKNFSQCLESKLENSPVENVTAASTLLSQAKIDTGENKFPGSAPQQHSILSNQTSKSSDNRETPRNHSLPKCNSHLEITIPKDLKLKEAEKTDEKQLIIDAGQKRFGAVSCNVCGMLYTASNPEDETQHLLFHNQFISAVKYVGWKKERILAEYPDGRIIMVLPEDPKYALKKVDEIREMVDNDLGFQQAPLMCYSRTKTLLFISNDKKVVGCLIAEHIQWGYRVIEEKLPVIRSEEEKVRFERQKAWCCSTLPEPAICGISRIWVFSMMRRKKIASRMIECLRSNFIYGSYLSKEEIAFSDPTPDGKLFATQYCGTGQFLVYNFINGQNST.

The span at 1-25 (MMSIQEKSKENSSKVTKKSDDKNSE) shows a compositional bias: basic and acidic residues. Positions 1-188 (MMSIQEKSKE…VLEVKSDSKE (188 aa)) are disordered. Polar residues-rich tracts occupy residues 46 to 58 (KSQA…SKIN), 65 to 74 (RMSTRSSKAA), and 81 to 96 (KSIN…YSQE). Over residues 131–140 (VSRRSLRSRE) the composition is skewed to basic and acidic residues. The span at 141 to 153 (IQGQVQAVKQSLP) shows a compositional bias: polar residues. Low complexity predominate over residues 161–170 (SSTQSKSNKT). Positions 178 to 188 (KVLEVKSDSKE) are enriched in basic and acidic residues. Position 200 is a phosphoserine (Ser200). 2 disordered regions span residues 221–300 (TQGS…KSKR) and 318–338 (NVEV…KPTE). A compositionally biased stretch (polar residues) spans 267–278 (HTQVNTNTTLPK). Basic and acidic residues predominate over residues 319–338 (VEVKKESSQMESVKEEKPTE). Lys332 participates in a covalent cross-link: Glycyl lysine isopeptide (Lys-Gly) (interchain with G-Cter in SUMO2). Ser412 bears the Phosphoserine mark. Disordered regions lie at residues 486–505 (ANEI…HSFD) and 542–582 (TGEN…KCNS). Residues 551–565 (APQQHSILSNQTSKS) show a composition bias toward polar residues. Residues 617–641 (VSCNVCGMLYTASNPEDETQHLLFH) form a CCHH-type zinc finger. Acetyl-CoA contacts are provided by residues 772–774 (IWV), 780–785 (RKKIAS), and 812–814 (TPD).

Belongs to the acetyltransferase family. ECO subfamily. As to quaternary structure, the subunit structure is controversial. Monomer. Homodimer. Phosphorylated during mitosis, when associated with chromosomes. As to expression, widely expressed. Expressed in heart, brain, liver, placenta, lung, kidney and pancreas. Highly expressed in muscle.

It is found in the nucleus. Its subcellular location is the chromosome. The enzyme catalyses L-lysyl-[protein] + acetyl-CoA = N(6)-acetyl-L-lysyl-[protein] + CoA + H(+). Acetyltransferase required for the establishment of sister chromatid cohesion. Couples the processes of cohesion and DNA replication to ensure that only sister chromatids become paired together. In contrast to the structural cohesins, the deposition and establishment factors are required only during S phase. Acts by mediating the acetylation of cohesin component SMC3. This Homo sapiens (Human) protein is N-acetyltransferase ESCO1 (ESCO1).